We begin with the raw amino-acid sequence, 576 residues long: Proline--tRNA ligase (576 aa).

Belongs to the class-II aminoacyl-tRNA synthetase family. ProS type 1 subfamily. As to quaternary structure, homodimer.

The protein localises to the cytoplasm. The catalysed reaction is tRNA(Pro) + L-proline + ATP = L-prolyl-tRNA(Pro) + AMP + diphosphate. Functionally, catalyzes the attachment of proline to tRNA(Pro) in a two-step reaction: proline is first activated by ATP to form Pro-AMP and then transferred to the acceptor end of tRNA(Pro). As ProRS can inadvertently accommodate and process non-cognate amino acids such as alanine and cysteine, to avoid such errors it has two additional distinct editing activities against alanine. One activity is designated as 'pretransfer' editing and involves the tRNA(Pro)-independent hydrolysis of activated Ala-AMP. The other activity is designated 'posttransfer' editing and involves deacylation of mischarged Ala-tRNA(Pro). The misacylated Cys-tRNA(Pro) is not edited by ProRS. The sequence is that of Proline--tRNA ligase from Bordetella pertussis (strain Tohama I / ATCC BAA-589 / NCTC 13251).